The chain runs to 223 residues: Ribosomal RNA small subunit methyltransferase G (223 aa).

S-adenosyl-L-methionine-binding positions include Gly82, Leu87, 133–134 (AE), and Arg151.

This sequence belongs to the methyltransferase superfamily. RNA methyltransferase RsmG family.

Its subcellular location is the cytoplasm. Specifically methylates the N7 position of guanine in position 518 of 16S rRNA. The chain is Ribosomal RNA small subunit methyltransferase G from Corynebacterium glutamicum (strain ATCC 13032 / DSM 20300 / JCM 1318 / BCRC 11384 / CCUG 27702 / LMG 3730 / NBRC 12168 / NCIMB 10025 / NRRL B-2784 / 534).